Consider the following 190-residue polypeptide: Histone H5 (190 aa).

Residues 1–29 are disordered; that stretch reads MTESLVLSPAPAKPKRVKASRRSASHPTY. Residues 13–24 show a composition bias toward basic residues; the sequence is KPKRVKASRRSA. 4 positions are modified to phosphoserine: S23, S30, S146, and S167. Residues 25–98 enclose the H15 domain; sequence SHPTYSEMIA…GASGSFRLAK (74 aa). The interval 87–190 is disordered; sequence GVGASGSFRL…SGARKSPKKK (104 aa). A compositionally biased stretch (basic residues) spans 104 to 190; it reads RSPGKKKKAV…SGARKSPKKK (87 aa).

Belongs to the histone H1/H5 family. As to expression, erythroid cells.

It localises to the nucleus. Its subcellular location is the chromosome. Histone H5 performs the same function as H1, being necessary for the condensation of nucleosome chains into higher order structures, and replaces histone H1 in certain cells. The polypeptide is Histone H5 (Gallus gallus (Chicken)).